Reading from the N-terminus, the 1014-residue chain is Resistance to glucose repression protein 1 (1014 aa).

The disordered stretch occupies residues 1–63; that stretch reads MSTNLANYFA…AVQAKNDDDF (63 aa). The residue at position 2 (Ser-2) is an N-acetylserine. A compositionally biased stretch (basic and acidic residues) spans 11 to 34; it reads GKKDIENEHVNRNASHESNSKSDV. The residue at position 73 (Thr-73) is a Phosphothreonine. Ser-75 bears the Phosphoserine mark. Disordered regions lie at residues 90-144 and 236-270; these read LGRS…YLIP and SEGN…KNSK. The span at 104-115 shows a compositional bias: low complexity; it reads YDNSSNNSSSNS. Phosphoserine is present on residues Ser-242 and Ser-254. Residues 247 to 260 show a composition bias toward basic and acidic residues; the sequence is DLERGYGSDDENSK. Residues 277–283 carry the Nuclear localization signal motif; the sequence is KPILKKR. Ser-311 is modified (phosphoserine). The disordered stretch occupies residues 340–463; sequence YPKESNSSVS…SEKSNKPTKN (124 aa). Composition is skewed to polar residues over residues 343 to 352, 361 to 370, 389 to 407, and 415 to 455; these read ESNSSVSLKS, STIPNPVGEN, HVQN…LENS, and LDQN…NPSE. The residue at position 421 (Ser-421) is a Phosphoserine. Tyr-480 is subject to Phosphotyrosine. Phosphoserine is present on Ser-490. Disordered stretches follow at residues 531-557 and 570-591; these read EHLN…DEEH and SDSG…TTSR. Phosphoserine occurs at positions 570, 572, and 576. Residues 578–591 are compositionally biased toward polar residues; that stretch reads ITDNSSVASSTTSR. The short motif at 595 to 599 is the Nuclear localization signal element; it reads RPIIK. A phosphoserine mark is found at Ser-610, Ser-614, and Ser-680. Residues 690 to 897 form a disordered region; that stretch reads SKEKHVPQLH…QSFRIVNNTP (208 aa). Positions 722 to 740 are enriched in low complexity; it reads YSSSSDSEQQFIEDSQYNS. The span at 741-758 shows a compositional bias: acidic residues; sequence SDDEEEEDDDDQEVDDNH. Polar residues-rich tracts occupy residues 770–802 and 822–833; these read LGKS…NFTG and RNSSSGNFIFNS. Positions 873–879 match the Nuclear localization signal motif; that stretch reads KKKALPK. Residues 884-897 show a composition bias toward polar residues; that stretch reads SDSSQSFRIVNNTP. Thr-896 carries the phosphothreonine modification. Ser-898 is modified (phosphoserine). Residues 959-972 are compositionally biased toward basic and acidic residues; the sequence is KKVDSVQTTRKEAS. The tract at residues 959-982 is disordered; that stretch reads KKVDSVQTTRKEASLTDSSNESLH. Ser-980 carries the phosphoserine modification.

Interacts with SAK1.

It localises to the nucleus. Functionally, involved in RNA processing and negative regulation of glucose repression. Regulates the level of two antigens, P43 and P70. Binds to protein phosphatase type 1. Functions with REG2 and SNF1 protein kinase to regulate growth. Might regulate SNF1 directly or indirectly. The polypeptide is Resistance to glucose repression protein 1 (REG1) (Saccharomyces cerevisiae (strain ATCC 204508 / S288c) (Baker's yeast)).